The following is a 107-amino-acid chain: Large ribosomal subunit protein P1 (107 aa).

Residues 67–82 are compositionally biased toward low complexity; the sequence is PTATSAAAAPAAGEAS. The disordered stretch occupies residues 67–107; it reads PTATSAAAAPAAGEASGKAEEKKKEEPEEEGDDDMGFGLFD. Over residues 83-92 the composition is skewed to basic and acidic residues; the sequence is GKAEEKKKEE.

This sequence belongs to the eukaryotic ribosomal protein P1/P2 family. As to quaternary structure, P1 and P2 exist as dimers at the large ribosomal subunit.

In terms of biological role, plays an important role in the elongation step of protein synthesis. This chain is Large ribosomal subunit protein P1, found in Leishmania peruviana.